A 566-amino-acid chain; its full sequence is Glutamate--tRNA ligase (566 aa).

The 'HIGH' region motif lies at Pro93–Asn103.

The protein belongs to the class-I aminoacyl-tRNA synthetase family. Glutamate--tRNA ligase type 2 subfamily.

It localises to the cytoplasm. It carries out the reaction tRNA(Glu) + L-glutamate + ATP = L-glutamyl-tRNA(Glu) + AMP + diphosphate. In terms of biological role, catalyzes the attachment of glutamate to tRNA(Glu) in a two-step reaction: glutamate is first activated by ATP to form Glu-AMP and then transferred to the acceptor end of tRNA(Glu). In Staphylothermus marinus (strain ATCC 43588 / DSM 3639 / JCM 9404 / F1), this protein is Glutamate--tRNA ligase.